Consider the following 210-residue polypeptide: HTH-type transcriptional repressor FabR (210 aa).

Residues 10-70 (KTRRSLVEAA…TMVDESGLML (61 aa)) form the HTH tetR-type domain. A DNA-binding region (H-T-H motif) is located at residues 33–52 (SLREVAREAGIAPTSFYRHF).

As to quaternary structure, homodimer.

The protein resides in the cytoplasm. In terms of biological role, represses the transcription of fabB, involved in unsaturated fatty acid (UFA) biosynthesis. By controlling UFA production, FabR directly influences the physical properties of the membrane bilayer. The sequence is that of HTH-type transcriptional repressor FabR from Citrobacter koseri (strain ATCC BAA-895 / CDC 4225-83 / SGSC4696).